A 271-amino-acid polypeptide reads, in one-letter code: Ribonuclease HII (271 aa).

Positions 84 to 271 (VLIAGVDEVG…HRMSFLSNYI (188 aa)) constitute an RNase H type-2 domain. Residues aspartate 90, glutamate 91, and aspartate 187 each contribute to the a divalent metal cation site.

This sequence belongs to the RNase HII family. Mn(2+) serves as cofactor. The cofactor is Mg(2+).

The protein resides in the cytoplasm. The enzyme catalyses Endonucleolytic cleavage to 5'-phosphomonoester.. Endonuclease that specifically degrades the RNA of RNA-DNA hybrids. The chain is Ribonuclease HII from Clostridium tetani (strain Massachusetts / E88).